Here is a 514-residue protein sequence, read N- to C-terminus: ATP synthase subunit alpha (514 aa).

ATP is bound at residue 170 to 177 (GDRQIGKT).

It belongs to the ATPase alpha/beta chains family. In terms of assembly, F-type ATPases have 2 components, CF(1) - the catalytic core - and CF(0) - the membrane proton channel. CF(1) has five subunits: alpha(3), beta(3), gamma(1), delta(1), epsilon(1). CF(0) has three main subunits: a(1), b(2) and c(9-12). The alpha and beta chains form an alternating ring which encloses part of the gamma chain. CF(1) is attached to CF(0) by a central stalk formed by the gamma and epsilon chains, while a peripheral stalk is formed by the delta and b chains.

The protein resides in the cell inner membrane. The enzyme catalyses ATP + H2O + 4 H(+)(in) = ADP + phosphate + 5 H(+)(out). Functionally, produces ATP from ADP in the presence of a proton gradient across the membrane. The alpha chain is a regulatory subunit. In Pseudomonas fluorescens (strain ATCC BAA-477 / NRRL B-23932 / Pf-5), this protein is ATP synthase subunit alpha.